Consider the following 161-residue polypeptide: Nucleotide-binding protein XOO0647 (161 aa).

Belongs to the YajQ family.

Nucleotide-binding protein. The chain is Nucleotide-binding protein XOO0647 from Xanthomonas oryzae pv. oryzae (strain MAFF 311018).